The following is an 88-amino-acid chain: Putative membrane protein insertion efficiency factor (88 aa).

Positions 68 to 88 (VPPKKDKNADSEHSCKVHHHH) are disordered. The segment covering 69–82 (PPKKDKNADSEHSC) has biased composition (basic and acidic residues).

Belongs to the UPF0161 family.

Its subcellular location is the cell membrane. Its function is as follows. Could be involved in insertion of integral membrane proteins into the membrane. This chain is Putative membrane protein insertion efficiency factor, found in Listeria monocytogenes serovar 1/2a (strain ATCC BAA-679 / EGD-e).